The chain runs to 321 residues: MSFAKSCKNELSRIEINRECCERAELAAFIHMNGSLTIKGDVTLHLTTENPAIARRIFRVFKSRFKKEMQILMRKKMRLQKGNSYSLILTGKNTVSLVLSNLEITKGSFDLNTGITPELVANRCCKRAYLRGAFMARGSIANPDASYHMEMTADYEEYLDDLIKVMQYFELSPGKLARKKEYVSYLKDSEQICEFLNIIGAHKTLLDYENVRVMKGMRNKINRLVNCETANLQKTVVASLRHIKNIQTIDENLGLTQLPKSLQEVAIKRVEYPEANLKELGELLEPPVGKSGVNHRLRKLEKIAEQLHQTGYYDENNGYLQ.

The H-T-H motif DNA-binding region spans 276–309 (NLKELGELLEPPVGKSGVNHRLRKLEKIAEQLHQ).

This sequence belongs to the WhiA family.

Functionally, involved in cell division and chromosome segregation. In Natranaerobius thermophilus (strain ATCC BAA-1301 / DSM 18059 / JW/NM-WN-LF), this protein is Probable cell division protein WhiA.